Here is a 232-residue protein sequence, read N- to C-terminus: Orotate phosphoribosyltransferase (232 aa).

5-phospho-alpha-D-ribose 1-diphosphate is bound by residues Arg-107, Lys-108, Lys-111, and 133-141; that span reads EDLTTDGGS. Residue Thr-137 coordinates orotate.

It belongs to the purine/pyrimidine phosphoribosyltransferase family. PyrE subfamily. As to quaternary structure, homodimer. It depends on Mg(2+) as a cofactor.

The enzyme catalyses orotidine 5'-phosphate + diphosphate = orotate + 5-phospho-alpha-D-ribose 1-diphosphate. It functions in the pathway pyrimidine metabolism; UMP biosynthesis via de novo pathway; UMP from orotate: step 1/2. In terms of biological role, catalyzes the transfer of a ribosyl phosphate group from 5-phosphoribose 1-diphosphate to orotate, leading to the formation of orotidine monophosphate (OMP). This Cereibacter sphaeroides (strain ATCC 17029 / ATH 2.4.9) (Rhodobacter sphaeroides) protein is Orotate phosphoribosyltransferase.